We begin with the raw amino-acid sequence, 749 residues long: Phototropin (749 aa).

A PAS 1 domain is found at 7-80 (PASQLTKVLA…QKIRDAIKKG (74 aa)). FMN contacts are provided by residues 56 to 61 (NCRFLQ), arginine 74, asparagine 89, asparagine 99, and glutamine 120. Cysteine 57 carries the post-translational modification S-4a-FMN cysteine. The 55-residue stretch at 81–135 (EACSVRLLNYRKDGTPFWNLLTVTPIKTPDGRVSKFVGVQVDVTSKTEGKALADN) folds into the PAC 1 domain. Positions 200–273 (VALDLATTVE…DQIRAAIKEG (74 aa)) constitute a PAS 2 domain. One can recognise a PAC 2 domain in the interval 274–328 (SELTVRILNYTKAGKAFWNMFTLAPMRDQDGHARFFVGVQVDVTAQSTSPDKAPV). The region spanning 404-712 (FRRVKQLGAG…ANEIKSHPWF (309 aa)) is the Protein kinase domain. ATP-binding positions include 410–418 (LGAGDVGLV) and lysine 433. Aspartate 529 (proton acceptor) is an active-site residue. Disordered stretches follow at residues 563–591 (KIGGAGAAGGSAPKSPKKSSSKSGGSSSG) and 729–749 (PRRASKAAGGSSTGGAAFDNY). An AGC-kinase C-terminal domain is found at 713-749 (KGINWALLRHQQPPYVPRRASKAAGGSSTGGAAFDNY). Residues 734–749 (KAAGGSSTGGAAFDNY) show a composition bias toward low complexity.

It belongs to the protein kinase superfamily. AGC Ser/Thr protein kinase family. The cofactor is FMN. In terms of processing, autophosphorylated in response to blue light irradiation. 2 molecules of FMN bind covalently to cysteines after exposure to blue light and are reversed in the dark. In terms of tissue distribution, expressed in gametes, pre-gametes and gametes generated by pre-gametes (at protein level).

It is found in the membrane. It carries out the reaction L-seryl-[protein] + ATP = O-phospho-L-seryl-[protein] + ADP + H(+). The enzyme catalyses L-threonyl-[protein] + ATP = O-phospho-L-threonyl-[protein] + ADP + H(+). In terms of biological role, protein kinase that acts as a blue light photoreceptor. Required for non-photochemical quenching (NPQ), a mechanism that converts and dissipates the harmful excess absorbed light energy into heat and protect the photosynthetic apparatus from photo-oxidative damage. Controls the energy-dependent chlorophyll fluorescence quenching (qE) activity of chlorophyll excited states by inducing the expression of the qE effector protein LHCSR3 in high light intensities. The polypeptide is Phototropin (Chlamydomonas reinhardtii (Chlamydomonas smithii)).